Consider the following 330-residue polypeptide: Type II restriction enzyme Cfr9I (330 aa).

The protein belongs to the XcyI type II restriction endonuclease family. Mg(2+) serves as cofactor.

It carries out the reaction Endonucleolytic cleavage of DNA to give specific double-stranded fragments with terminal 5'-phosphates.. Its function is as follows. An E and P subtype restriction enzyme that recognizes the double-stranded sequence 5'-CCCGGG-3' and cleaves after C-1. The protein is Type II restriction enzyme Cfr9I (cfr9IR) of Citrobacter freundii.